The primary structure comprises 203 residues: MAILLPDLPYAYDALEPYIDAETMTLHHDKHHATYVANANAALEKHPEIGENLEVLLADVEQIPADIRQSLINNGGGHLNHALFWELLSPEKTKVTAEVAAAINEAFGSFDDFKAAFTAAATTRFGSGWAWLVVDKEGKLEVTSTANQDTPISQGLKPILALDVWEHAYYLNYRNVRPNYIKAFFEVINWNTVARLYAEALTK.

H27, H81, D163, and H167 together coordinate Fe(3+). The Mn(2+) site is built by H27, H81, D163, and H167.

This sequence belongs to the iron/manganese superoxide dismutase family. Mn(2+) serves as cofactor. Requires Fe(3+) as cofactor.

It carries out the reaction 2 superoxide + 2 H(+) = H2O2 + O2. Destroys superoxide anion radicals which are normally produced within the cells and which are toxic to biological systems. Catalyzes the dismutation of superoxide anion radicals into O2 and H2O2 by successive reduction and oxidation of the transition metal ion at the active site. The protein is Superoxide dismutase [Mn/Fe] (sodA) of Streptococcus mutans serotype c (strain ATCC 700610 / UA159).